We begin with the raw amino-acid sequence, 603 residues long: ABC transporter E family member 1 (603 aa).

4Fe-4S ferredoxin-type domains lie at 7–39 and 46–75; these read RIAI…KLCI and KSAF…IINL. ABC transporter domains lie at 70-315 and 344-566; these read IQII…FLAG and VKSY…LSHL. Residues 110–117 and 381–388 each bind ATP; these read GTNGIGKS and GENGTGKT.

Belongs to the ABC transporter superfamily. ABCE family. Expressed in roots, stems, leaves, flowers and siliques.

The protein resides in the membrane. The polypeptide is ABC transporter E family member 1 (ABCE1) (Arabidopsis thaliana (Mouse-ear cress)).